The primary structure comprises 620 residues: DNA mismatch repair protein MutL (620 aa).

It belongs to the DNA mismatch repair MutL/HexB family.

In terms of biological role, this protein is involved in the repair of mismatches in DNA. It is required for dam-dependent methyl-directed DNA mismatch repair. May act as a 'molecular matchmaker', a protein that promotes the formation of a stable complex between two or more DNA-binding proteins in an ATP-dependent manner without itself being part of a final effector complex. This is DNA mismatch repair protein MutL from Clostridium tetani (strain Massachusetts / E88).